Here is a 513-residue protein sequence, read N- to C-terminus: Maturase K (513 aa).

This sequence belongs to the intron maturase 2 family. MatK subfamily.

It localises to the plastid. The protein resides in the chloroplast. In terms of biological role, usually encoded in the trnK tRNA gene intron. Probably assists in splicing its own and other chloroplast group II introns. This is Maturase K from Pinus parviflora (Japanese white pine).